We begin with the raw amino-acid sequence, 88 residues long: Small ribosomal subunit protein bS20 (88 aa).

It belongs to the bacterial ribosomal protein bS20 family.

Binds directly to 16S ribosomal RNA. In Coprothermobacter proteolyticus (strain ATCC 35245 / DSM 5265 / OCM 4 / BT), this protein is Small ribosomal subunit protein bS20.